The primary structure comprises 342 residues: UDP-N-acetylglucosamine--N-acetylmuramyl-(pentapeptide) pyrophosphoryl-undecaprenol N-acetylglucosamine transferase (342 aa).

UDP-N-acetyl-alpha-D-glucosamine is bound by residues 10 to 12 (TGG), Asn124, Ser177, and Gln275.

It belongs to the glycosyltransferase 28 family. MurG subfamily.

The protein localises to the cell inner membrane. The catalysed reaction is di-trans,octa-cis-undecaprenyl diphospho-N-acetyl-alpha-D-muramoyl-L-alanyl-D-glutamyl-meso-2,6-diaminopimeloyl-D-alanyl-D-alanine + UDP-N-acetyl-alpha-D-glucosamine = di-trans,octa-cis-undecaprenyl diphospho-[N-acetyl-alpha-D-glucosaminyl-(1-&gt;4)]-N-acetyl-alpha-D-muramoyl-L-alanyl-D-glutamyl-meso-2,6-diaminopimeloyl-D-alanyl-D-alanine + UDP + H(+). The protein operates within cell wall biogenesis; peptidoglycan biosynthesis. Functionally, cell wall formation. Catalyzes the transfer of a GlcNAc subunit on undecaprenyl-pyrophosphoryl-MurNAc-pentapeptide (lipid intermediate I) to form undecaprenyl-pyrophosphoryl-MurNAc-(pentapeptide)GlcNAc (lipid intermediate II). In Campylobacter jejuni subsp. jejuni serotype O:2 (strain ATCC 700819 / NCTC 11168), this protein is UDP-N-acetylglucosamine--N-acetylmuramyl-(pentapeptide) pyrophosphoryl-undecaprenol N-acetylglucosamine transferase.